The chain runs to 1026 residues: DNA cross-link repair 1A protein (1026 aa).

Residues 1–189 (MLEDTWEEEI…RDSKEPLGSP (189 aa)) are nuclear localization region. A disordered region spans residues 12–110 (EYKSKRKPKP…HRTRRGKQVT (99 aa)). Over residues 34-65 (SVEKSTDGKHQSKGNEKRTSENPGKTKDHKVC) the composition is skewed to basic and acidic residues. A compositionally biased stretch (low complexity) spans 71-82 (SQISAGSSQSSS). Basic residues predominate over residues 98 to 107 (KKQHRTRRGK). A UBZ4-type zinc finger spans residues 118–148 (DGYCPSCQMPFSSLLGQTPQWHVFECLDSPP). Residues Cys-121, Cys-124, His-139, and Cys-143 each contribute to the Zn(2+) site. Residues Lys-359, Lys-434, and Lys-522 each participate in a glycyl lysine isopeptide (Lys-Gly) (interchain with G-Cter in SUMO2) cross-link. The segment at 401 to 602 (SQEDLPHTDA…SSLSDLEFDA (202 aa)) is nuclear focus formation. Disordered stretches follow at residues 474 to 542 (PLEK…SKKV), 560 to 590 (ETSL…CKRK), and 602 to 651 (AKNL…PELG). The segment covering 527 to 540 (SPSSPKCSPSQPSK) has biased composition (low complexity). The segment covering 569 to 581 (EGPNVSPVVSPNQ) has biased composition (polar residues). 2 positions are modified to phosphoserine: Ser-574 and Ser-578. Residues 619–628 (RQHRRKRHKT) are compositionally biased toward basic residues. A Glycyl lysine isopeptide (Lys-Gly) (interchain with G-Cter in SUMO2) cross-link involves residue Lys-657.

It belongs to the DNA repair metallo-beta-lactamase (DRMBL) family. In terms of assembly, binds constitutively to TP53BP1. Binds CDC27, which is itself a component of the anaphase promoting complex (APC). Binds PIAS1.

The protein localises to the nucleus. It carries out the reaction a beta-lactam + H2O = a substituted beta-amino acid. Its function is as follows. May be required for DNA interstrand cross-link repair. Also required for checkpoint mediated cell cycle arrest in early prophase in response to mitotic spindle poisons. This chain is DNA cross-link repair 1A protein (Dclre1a), found in Mus musculus (Mouse).